A 195-amino-acid chain; its full sequence is GTP cyclohydrolase 1 (195 aa).

Zn(2+) is bound by residues C86, H89, and C158.

Belongs to the GTP cyclohydrolase I family. As to quaternary structure, homomer.

The catalysed reaction is GTP + H2O = 7,8-dihydroneopterin 3'-triphosphate + formate + H(+). The protein operates within cofactor biosynthesis; 7,8-dihydroneopterin triphosphate biosynthesis; 7,8-dihydroneopterin triphosphate from GTP: step 1/1. The protein is GTP cyclohydrolase 1 of Ruminiclostridium cellulolyticum (strain ATCC 35319 / DSM 5812 / JCM 6584 / H10) (Clostridium cellulolyticum).